The sequence spans 309 residues: Dehydrogenase/reductase SDR family member 7B (309 aa).

Over 1–4 (MDLT) the chain is Cytoplasmic. The chain crosses the membrane as a helical; Signal-anchor for type II membrane protein span at residues 5 to 25 (TWAIFPLLLGSIGVYSLYKLL). The Lumenal segment spans residues 26–272 (QRLRSGAYLQ…AVGERRKELL (247 aa)). Ser46 and Leu48 together coordinate NAD(+). Ser178 lines the substrate pocket. Tyr191, Lys195, and Thr226 together coordinate NAD(+). Tyr191 acts as the Proton acceptor in catalysis.

It belongs to the short-chain dehydrogenases/reductases (SDR) family.

It localises to the endoplasmic reticulum membrane. Its function is as follows. Putative oxidoreductase. The sequence is that of Dehydrogenase/reductase SDR family member 7B (dhrs7b) from Xenopus tropicalis (Western clawed frog).